A 354-amino-acid chain; its full sequence is Arginase-2, mitochondrial (354 aa).

Residues methionine 1–serine 22 constitute a mitochondrion transit peptide. Mn(2+) contacts are provided by histidine 120, aspartate 143, histidine 145, and aspartate 147. Substrate-binding positions include histidine 145–asparagine 149, serine 156–asparagine 158, and aspartate 202. 2 residues coordinate Mn(2+): aspartate 251 and aspartate 253. Threonine 265 and glutamate 296 together coordinate substrate. The segment at tyrosine 334 to isoleucine 354 is disordered.

This sequence belongs to the arginase family. Homotrimer. It depends on Mn(2+) as a cofactor. Expressed most strongly in kidney and prostate, much less strongly in the brain, skeletal muscle, placenta, lung, mammary gland, macrophage, uterus, testis and gut, but apparently not in the liver, heart and pancreas. Expressed in activated T cells.

It is found in the mitochondrion. It catalyses the reaction L-arginine + H2O = urea + L-ornithine. The protein operates within nitrogen metabolism; urea cycle; L-ornithine and urea from L-arginine: step 1/1. Functionally, may play a role in the regulation of extra-urea cycle arginine metabolism and also in down-regulation of nitric oxide synthesis. Extrahepatic arginase functions to regulate L-arginine bioavailability to nitric oxid synthase (NOS). Arginine metabolism is a critical regulator of innate and adaptive immune responses. Seems to be involved in negative regulation of the survival capacity of activated CD4(+) and CD8(+) T cells. May suppress inflammation-related signaling in asthmatic airway epithelium. May contribute to the immune evasion of H.pylori by restricting M1 macrophage activation and polyamine metabolism. In fetal dendritic cells may play a role in promoting immune suppression and T cell TNF-alpha production during gestation. Regulates RPS6KB1 signaling, which promotes endothelial cell senescence and inflammation and implicates NOS3/eNOS dysfunction. Can inhibit endothelial autophagy independently of its enzymatic activity implicating mTORC2 signaling. Involved in vascular smooth muscle cell senescence and apoptosis independently of its enzymatic activity. Since NOS is found in the penile corpus cavernosum smooth muscle, the clitoral corpus cavernosum and the vagina, arginase-2 plays a role in both male and female sexual arousal. In Homo sapiens (Human), this protein is Arginase-2, mitochondrial (ARG2).